We begin with the raw amino-acid sequence, 376 residues long: Sulfate/thiosulfate import ATP-binding protein CysA (376 aa).

Positions 3–237 (IRLDNISKHF…PNSRFVFDFF (235 aa)) constitute an ABC transporter domain. 35 to 42 (GPSGSGKT) contributes to the ATP binding site.

This sequence belongs to the ABC transporter superfamily. Sulfate/tungstate importer (TC 3.A.1.6) family. As to quaternary structure, the complex is composed of two ATP-binding proteins (CysA), two transmembrane proteins (CysT and CysW) and a solute-binding protein (CysP).

The protein resides in the cell inner membrane. The enzyme catalyses sulfate(out) + ATP + H2O = sulfate(in) + ADP + phosphate + H(+). The catalysed reaction is thiosulfate(out) + ATP + H2O = thiosulfate(in) + ADP + phosphate + H(+). Part of the ABC transporter complex CysAWTP involved in sulfate/thiosulfate import. Responsible for energy coupling to the transport system. The protein is Sulfate/thiosulfate import ATP-binding protein CysA of Vibrio cholerae serotype O1 (strain ATCC 39315 / El Tor Inaba N16961).